The sequence spans 98 residues: Co-chaperonin GroES (98 aa).

It belongs to the GroES chaperonin family. In terms of assembly, heptamer of 7 subunits arranged in a ring. Interacts with the chaperonin GroEL.

It is found in the cytoplasm. Functionally, together with the chaperonin GroEL, plays an essential role in assisting protein folding. The GroEL-GroES system forms a nano-cage that allows encapsulation of the non-native substrate proteins and provides a physical environment optimized to promote and accelerate protein folding. GroES binds to the apical surface of the GroEL ring, thereby capping the opening of the GroEL channel. The chain is Co-chaperonin GroES from Corynebacterium diphtheriae (strain ATCC 700971 / NCTC 13129 / Biotype gravis).